A 430-amino-acid polypeptide reads, in one-letter code: Dye-decolorizing peroxidase Tfu_3078 (430 aa).

Residues 1-39 (MTEPDTERKGSSRRGFLAGLGAAALTGAGIGMAAGEVLR) constitute a signal peptide (tat-type signal). The segment at 42–75 (LPDSDPAASPEAEQRLRMAAQRADATAAPQPGIS) is disordered. Residues 60–69 (AAQRADATAA) show a composition bias toward low complexity. Asp242 serves as the catalytic Proton acceptor. Heme is bound at residue His338.

This sequence belongs to the DyP-type peroxidase family. Monomer. Heme b is required as a cofactor. Post-translationally, exported by the Tat system. The position of the signal peptide cleavage has not been experimentally proven.

The protein localises to the secreted. It catalyses the reaction Reactive Blue 5 + 2 H2O2 = 2,2'-disulfonyl azobenzene + 3-[(4-amino-6-chloro-1,3,5-triazin-2-yl)amino]benzenesulfonate + phthalate + 2 H2O + 2 H(+). Its function is as follows. Peroxidase that is able to convert a large number of compounds, but its physiological substrate is not known. Shows high reactivity towards anthraquinone dyes (e.g. Reactive Blue 19) and a modest activity towards standard peroxidase substrates (such as guaiacol and 2,6-dimethoxyphenol) and azo dyes (e.g. Reactive Blue 5). Is also able to oxidize aromatic sulfides enantioselectively, resulting in the corresponding (R)-sulfoxides, but with a poor efficiency. Does not display catalase activity. In Thermobifida fusca (strain YX), this protein is Dye-decolorizing peroxidase Tfu_3078.